We begin with the raw amino-acid sequence, 1365 residues long: Serine/threonine-protein kinase LMTK1 (1365 aa).

Residues 32 to 52 form a helical membrane-spanning segment; sequence LAVVAVSFSGIFTVVILMLAC. Positions 126-396 constitute a Protein kinase domain; that stretch reads LLYLKEIGHG…PTAEEVHLLL (271 aa). Residues 132–140 and Lys157 contribute to the ATP site; that span reads IGHGWFGKV. The active-site Proton acceptor is the Asp254. Phosphoserine is present on Ser500. Disordered regions lie at residues 550 to 623, 638 to 698, 791 to 1186, 1237 to 1293, and 1343 to 1365; these read PDCA…LPAE, DDPL…GYVS, QEAE…PAVP, ESPT…EWDG, and ISDS…YTEA. Residues 560–575 show a composition bias toward polar residues; sequence QAVTDQDNNSEESTVA. Low complexity-rich tracts occupy residues 638–655 and 675–686; these read DDPL…QPSP and SSNMSANNNSAS. Polar residues-rich tracts occupy residues 848 to 860 and 869 to 879; these read LESS…QEAP and EATSGVFTDLS. Low complexity-rich tracts occupy residues 904–918 and 981–993; these read PDSL…SASD and PLLS…LSKK. Residues 1015-1030 show a composition bias toward basic and acidic residues; it reads PEKHSGIQDSQKEQDL. Ser1035 bears the Phosphoserine mark. Positions 1037–1053 are enriched in polar residues; that stretch reads GHQSVQAFPRSAVSSEV. Low complexity predominate over residues 1072 to 1083; the sequence is PLGAQGPVGVQP. A compositionally biased stretch (polar residues) spans 1104 to 1132; it reads GSGTEPQGPSGQLSGRAQQGQMGNPSTPR. Residues 1150–1164 show a composition bias toward acidic residues; that stretch reads PEEDEDTEDSEESDE. Phosphothreonine is present on Thr1156. Phosphoserine occurs at positions 1159, 1162, 1175, 1178, and 1253. A compositionally biased stretch (gly residues) spans 1354–1365; sequence PAAGAGGRYTEA.

This sequence belongs to the protein kinase superfamily. Tyr protein kinase family. As to quaternary structure, interacts with CDK5. Post-translationally, autophosphorylated. Phosphorylated by CDK5. In terms of tissue distribution, expressed in brain, and, to a lower extent, in kidney, heart, lung and skeletal muscle. In the brain, expressed in the olfactory bulb, cerebellum, striatum, hippocampal formation, thalamus, hypothalamus, and pontine nuclei (at protein level).

It is found in the membrane. It localises to the cytoplasm. The protein resides in the perinuclear region. Its subcellular location is the cell projection. The protein localises to the dendrite. It is found in the axon. It localises to the growth cone. The catalysed reaction is L-seryl-[protein] + ATP = O-phospho-L-seryl-[protein] + ADP + H(+). It carries out the reaction L-threonyl-[protein] + ATP = O-phospho-L-threonyl-[protein] + ADP + H(+). Functionally, may be involved in neuronal differentiation. The chain is Serine/threonine-protein kinase LMTK1 (Aatk) from Mus musculus (Mouse).